The sequence spans 279 residues: Zinc finger CCCH domain-containing protein 1 (279 aa).

A disordered region spans residues 20–45 (DVIVLSPGPPARRRPPPVKAVEPESG). 2 consecutive C3H1-type zinc fingers follow at residues 56 to 84 (FYKT…HGDE) and 139 to 167 (RAIT…HVSA).

The polypeptide is Zinc finger CCCH domain-containing protein 1 (Oryza sativa subsp. japonica (Rice)).